Here is an 85-residue protein sequence, read N- to C-terminus: Putative membrane protein insertion efficiency factor (85 aa).

Belongs to the UPF0161 family.

The protein localises to the cell inner membrane. In terms of biological role, could be involved in insertion of integral membrane proteins into the membrane. This is Putative membrane protein insertion efficiency factor from Phenylobacterium zucineum (strain HLK1).